Consider the following 120-residue polypeptide: Ribosome-binding factor A (120 aa).

Belongs to the RbfA family. In terms of assembly, monomer. Binds 30S ribosomal subunits, but not 50S ribosomal subunits or 70S ribosomes.

It is found in the cytoplasm. Its function is as follows. One of several proteins that assist in the late maturation steps of the functional core of the 30S ribosomal subunit. Associates with free 30S ribosomal subunits (but not with 30S subunits that are part of 70S ribosomes or polysomes). Required for efficient processing of 16S rRNA. May interact with the 5'-terminal helix region of 16S rRNA. In Limosilactobacillus fermentum (strain NBRC 3956 / LMG 18251) (Lactobacillus fermentum), this protein is Ribosome-binding factor A.